Reading from the N-terminus, the 444-residue chain is Ribosomal protein uS12 methylthiotransferase RimO (444 aa).

Residues 4 to 120 (KSAALVSLGC…LKSFIRDHEA (117 aa)) form the MTTase N-terminal domain. The [4Fe-4S] cluster site is built by cysteine 13, cysteine 49, cysteine 83, cysteine 157, cysteine 161, and cysteine 164. A Radical SAM core domain is found at 143-371 (VEGRSSAYVK…LELQRGISRR (229 aa)). Positions 374 to 442 (ESLVGRVLPV…DYDVEAELLS (69 aa)) constitute a TRAM domain.

Belongs to the methylthiotransferase family. RimO subfamily. Requires [4Fe-4S] cluster as cofactor.

The protein localises to the cytoplasm. It carries out the reaction L-aspartate(89)-[ribosomal protein uS12]-hydrogen + (sulfur carrier)-SH + AH2 + 2 S-adenosyl-L-methionine = 3-methylsulfanyl-L-aspartate(89)-[ribosomal protein uS12]-hydrogen + (sulfur carrier)-H + 5'-deoxyadenosine + L-methionine + A + S-adenosyl-L-homocysteine + 2 H(+). Catalyzes the methylthiolation of an aspartic acid residue of ribosomal protein uS12. The chain is Ribosomal protein uS12 methylthiotransferase RimO from Syntrophobacter fumaroxidans (strain DSM 10017 / MPOB).